The following is a 910-amino-acid chain: Staphylococcal nuclease domain-containing protein 1 (910 aa).

The residue at position 2 (alanine 2) is an N-acetylalanine. TNase-like domains follow at residues 18–166, 193–328, and 341–496; these read TVQR…MWSE, KPVN…IWRD, and KQFV…LHSK. Threonine 103 carries the phosphothreonine modification. At lysine 193 the chain carries N6-acetyllysine. Phosphothreonine occurs at positions 235 and 240. 2 consecutive short sequence motifs (nuclear localization signal) follow at residues 321-325 and 388-392; these read RRLRI and KKLRP. Position 426 is a phosphoserine (serine 426). Residue lysine 513 forms a Glycyl lysine isopeptide (Lys-Gly) (interchain with G-Cter in SUMO2) linkage. One can recognise a TNase-like 4 domain in the interval 525–660; the sequence is GRSEAVVEYV…KQRKEKVWAH (136 aa). An N6-acetyllysine modification is found at lysine 641. Serine 645 carries the phosphoserine modification. One can recognise a Tudor domain in the interval 729-787; the sequence is APRRGEFCIAKFVDGEWYRARVEKVESPAKVHVFYIDYGNREILPSTRLGTLPPAFSTR. Phosphothreonine is present on threonine 779. Phosphoserine occurs at positions 785 and 909.

Forms a ternary complex with STAT6 and POLR2A. Associates with the RNA-induced silencing complex (RISC). Interacts with the RISC components AGO2, FMR1 and TNRC6A. Interacts with GTF2E1 and GTF2E2. Interacts with PIM1. Interacts with STAT5. Interacts with SYT11 (via C2 2 domain); the interaction with SYT11 is direct. Post-translationally, phosphorylated by PIM1 in vitro.

The protein resides in the cytoplasm. Its subcellular location is the nucleus. It is found in the melanosome. It carries out the reaction Endonucleolytic cleavage to nucleoside 3'-phosphates and 3'-phosphooligonucleotide end-products.. In terms of biological role, endonuclease that mediates miRNA decay of both protein-free and AGO2-loaded miRNAs. As part of its function in miRNA decay, regulates mRNAs involved in G1-to-S phase transition. Functions as a bridging factor between STAT6 and the basal transcription factor. Plays a role in PIM1 regulation of MYB activity. Functions as a transcriptional coactivator for STAT5. In Mus musculus (Mouse), this protein is Staphylococcal nuclease domain-containing protein 1 (Snd1).